A 471-amino-acid polypeptide reads, in one-letter code: Cell division protein FtsP (471 aa).

Residues 1–27 (MSLNRRQFIQASGLALCAGMTPLAAKA) constitute a signal peptide (tat-type signal). The region spanning 229-287 (VRLRLLNASNSRRYVMRLSDGRAMNVIASDQGLLPAPMAVNQLSLAPGERREILIDMSQ) is the Plastocyanin-like domain.

It belongs to the FtsP family. Predicted to be exported by the Tat system. The position of the signal peptide cleavage has not been experimentally proven.

Its subcellular location is the periplasm. Its function is as follows. Cell division protein that is required for growth during stress conditions. May be involved in protecting or stabilizing the divisomal assembly under conditions of stress. This Pectobacterium atrosepticum (strain SCRI 1043 / ATCC BAA-672) (Erwinia carotovora subsp. atroseptica) protein is Cell division protein FtsP.